We begin with the raw amino-acid sequence, 69 residues long: Sec-independent protein translocase protein TatA (69 aa).

The chain crosses the membrane as a helical span at residues 1–21; it reads MFGLGGQELILILMIILLLFG. A disordered region spans residues 49–69; that stretch reads EFNKAMDDETPKKKDFGPDRE.

Belongs to the TatA/E family. In terms of assembly, forms a complex with TatC.

It localises to the cell inner membrane. Functionally, part of the twin-arginine translocation (Tat) system that transports large folded proteins containing a characteristic twin-arginine motif in their signal peptide across membranes. TatA could form the protein-conducting channel of the Tat system. The chain is Sec-independent protein translocase protein TatA from Chlorobium luteolum (strain DSM 273 / BCRC 81028 / 2530) (Pelodictyon luteolum).